A 303-amino-acid polypeptide reads, in one-letter code: Siderophore enterobactin esterase (303 aa).

The protein belongs to the esterase D family. In terms of assembly, homodimer.

It carries out the reaction enterobactin + 3 H2O = 3 N-(2,3-dihydroxybenzoyl)-L-serine + 2 H(+). Its function is as follows. Displays specific enterobactin (ENB) esterase activity required for intracellular release of iron. Enterobactin is a xenosiderophore that is selectively produced by Gram-negative Enterobacteriaceae. The affinity for enterobactin is quite high, potentially due to the low natural abundance of this xenosiderophore in fungal habitats. Does not hydrolyze triacetylfusarinine C (TAFC). The protein is Siderophore enterobactin esterase of Emericella nidulans (strain FGSC A4 / ATCC 38163 / CBS 112.46 / NRRL 194 / M139) (Aspergillus nidulans).